The primary structure comprises 52 residues: uncharacterized protein (52 aa).

This is an uncharacterized protein from Haemophilus influenzae (strain ATCC 51907 / DSM 11121 / KW20 / Rd).